Here is a 251-residue protein sequence, read N- to C-terminus: Probable transcriptional regulatory protein jk1057 (251 aa).

The interval 1–22 (MAGHSKWATTKHKKAANDAKRG) is disordered.

The protein belongs to the TACO1 family.

It is found in the cytoplasm. The protein is Probable transcriptional regulatory protein jk1057 of Corynebacterium jeikeium (strain K411).